The sequence spans 195 residues: Imidazoleglycerol-phosphate dehydratase (195 aa).

The protein belongs to the imidazoleglycerol-phosphate dehydratase family.

The protein resides in the cytoplasm. The catalysed reaction is D-erythro-1-(imidazol-4-yl)glycerol 3-phosphate = 3-(imidazol-4-yl)-2-oxopropyl phosphate + H2O. It participates in amino-acid biosynthesis; L-histidine biosynthesis; L-histidine from 5-phospho-alpha-D-ribose 1-diphosphate: step 6/9. The protein is Imidazoleglycerol-phosphate dehydratase of Cereibacter sphaeroides (strain ATCC 17029 / ATH 2.4.9) (Rhodobacter sphaeroides).